The primary structure comprises 289 residues: 4-diphosphocytidyl-2-C-methyl-D-erythritol kinase (289 aa).

Lys-10 is a catalytic residue. Position 94 to 104 (94 to 104) interacts with ATP; sequence PVAAGLAGGSS. The active site involves Asp-136.

It belongs to the GHMP kinase family. IspE subfamily.

It carries out the reaction 4-CDP-2-C-methyl-D-erythritol + ATP = 4-CDP-2-C-methyl-D-erythritol 2-phosphate + ADP + H(+). It participates in isoprenoid biosynthesis; isopentenyl diphosphate biosynthesis via DXP pathway; isopentenyl diphosphate from 1-deoxy-D-xylulose 5-phosphate: step 3/6. Its function is as follows. Catalyzes the phosphorylation of the position 2 hydroxy group of 4-diphosphocytidyl-2C-methyl-D-erythritol. In Bacillus velezensis (strain DSM 23117 / BGSC 10A6 / LMG 26770 / FZB42) (Bacillus amyloliquefaciens subsp. plantarum), this protein is 4-diphosphocytidyl-2-C-methyl-D-erythritol kinase.